Here is a 201-residue protein sequence, read N- to C-terminus: Potassium-transporting ATPase KdpC subunit (201 aa).

A helical transmembrane segment spans residues 13 to 33; sequence IIFIIFTILCGGIYTIFITGI.

Belongs to the KdpC family. As to quaternary structure, the system is composed of three essential subunits: KdpA, KdpB and KdpC.

It is found in the cell membrane. Its function is as follows. Part of the high-affinity ATP-driven potassium transport (or Kdp) system, which catalyzes the hydrolysis of ATP coupled with the electrogenic transport of potassium into the cytoplasm. This subunit acts as a catalytic chaperone that increases the ATP-binding affinity of the ATP-hydrolyzing subunit KdpB by the formation of a transient KdpB/KdpC/ATP ternary complex. The polypeptide is Potassium-transporting ATPase KdpC subunit (Clostridium botulinum (strain Alaska E43 / Type E3)).